The chain runs to 130 residues: Large ribosomal subunit protein eL32 (130 aa).

Ser40 carries the post-translational modification Phosphoserine.

It belongs to the eukaryotic ribosomal protein eL32 family. In terms of assembly, component of the large ribosomal subunit (LSU). Mature yeast ribosomes consist of a small (40S) and a large (60S) subunit. The 40S small subunit contains 1 molecule of ribosomal RNA (18S rRNA) and 33 different proteins (encoded by 57 genes). The large 60S subunit contains 3 rRNA molecules (25S, 5.8S and 5S rRNA) and 46 different proteins (encoded by 81 genes).

It localises to the cytoplasm. Its function is as follows. Component of the ribosome, a large ribonucleoprotein complex responsible for the synthesis of proteins in the cell. The small ribosomal subunit (SSU) binds messenger RNAs (mRNAs) and translates the encoded message by selecting cognate aminoacyl-transfer RNA (tRNA) molecules. The large subunit (LSU) contains the ribosomal catalytic site termed the peptidyl transferase center (PTC), which catalyzes the formation of peptide bonds, thereby polymerizing the amino acids delivered by tRNAs into a polypeptide chain. The nascent polypeptides leave the ribosome through a tunnel in the LSU and interact with protein factors that function in enzymatic processing, targeting, and the membrane insertion of nascent chains at the exit of the ribosomal tunnel. In Saccharomyces cerevisiae (strain ATCC 204508 / S288c) (Baker's yeast), this protein is Large ribosomal subunit protein eL32.